A 1160-amino-acid chain; its full sequence is Large proline-rich protein BAG6 (1160 aa).

A Ubiquitin-like domain is found at 7–82; it reads IEVTVKTLDS…HLVERPPPQS (76 aa). 8 disordered regions span residues 76–114, 206–261, 367–422, 478–547, 563–628, 672–711, 962–1038, and 1126–1160; these read ERPPPQSSQPGGGGGGVSGSSGAADGGSSSSQSSAYTTS, EGQS…HPSP, IPMN…GQGT, ASAG…QTNQ, GDQT…DNLA, SGQPVFPSPNQQPPPSQATPPSAPSGPAPTTAPSGGAETL, SARR…AEPW, and YAQQVKSDIKKRLSDDPDYNHQRFPNTHRVFSEDA. The span at 85–94 shows a compositional bias: gly residues; sequence PGGGGGGVSG. Composition is skewed to low complexity over residues 95–110 and 223–233; these read SSGAADGGSSSSQSSA and SSSSFSAHPMD. Polar residues-rich tracts occupy residues 247–257 and 371–417; these read QTEGETQSGPN and LGST…QQTG. 2 stretches are compositionally biased toward low complexity: residues 478–495 and 566–614; these read ASAGHQGQQQGTAGAGAQ and TSTT…STAS. Residues 677-698 show a composition bias toward pro residues; it reads FPSPNQQPPPSQATPPSAPSGP. The span at 699-708 shows a compositional bias: low complexity; the sequence is APTTAPSGGA. A compositionally biased stretch (basic and acidic residues) spans 1132–1146; the sequence is SDIKKRLSDDPDYNH.

Component of the bag6/bat3 complex.

The protein resides in the cytoplasm. Its subcellular location is the cytosol. The protein localises to the nucleus. It is found in the secreted. It localises to the extracellular exosome. In terms of biological role, ATP-independent molecular chaperone preventing the aggregation of misfolded and hydrophobic patches-containing proteins. Functions as part of a cytosolic protein quality control complex, the bag6/bat3 complex, which maintains these client proteins in a soluble state and participates in their proper delivery to the endoplasmic reticulum or alternatively can promote their sorting to the proteasome where they undergo degradation. The bag6/bat3 complex is involved in the post-translational delivery of tail-anchored/type II transmembrane proteins to the endoplasmic reticulum membrane. Similarly, the bag6/bat3 complex also functions as a sorting platform for proteins of the secretory pathway that are mislocalized to the cytosol either delivering them to the proteasome for degradation or to the endoplasmic reticulum. The bag6/bat3 complex also plays a role in the endoplasmic reticulum-associated degradation (ERAD), a quality control mechanism that eliminates unwanted proteins of the endoplasmic reticulum through their retrotranslocation to the cytosol and their targeting to the proteasome. It maintains these retrotranslocated proteins in an unfolded yet soluble state condition in the cytosol to ensure their proper delivery to the proteasome. Also required for selective ubiquitin-mediated degradation of defective nascent chain polypeptides by the proteasome. Also involved in endoplasmic reticulum stress-induced pre-emptive quality control, a mechanism that selectively attenuates the translocation of newly synthesized proteins into the endoplasmic reticulum and reroutes them to the cytosol for proteasomal degradation. May ensure the proper degradation of these proteins and thereby protects the endoplasmic reticulum from protein overload upon stress. By stabilizing a large spectrum of proteins, may indirectly affect different biological processes including apoptosis. By controlling the steady-state expression of the IGF1R receptor, indirectly regulates the insulin-like growth factor receptor signaling pathway. Its function is as follows. When nuclear, may also act as a component of some chromatin regulator complex. This is Large proline-rich protein BAG6 from Danio rerio (Zebrafish).